The following is a 157-amino-acid chain: Large ribosomal subunit protein uL15 (157 aa).

The segment at Met1–Pro56 is disordered. Positions Ile23–Met35 are enriched in gly residues.

It belongs to the universal ribosomal protein uL15 family. Part of the 50S ribosomal subunit.

Its function is as follows. Binds to the 23S rRNA. The chain is Large ribosomal subunit protein uL15 from Synechococcus sp. (strain JA-3-3Ab) (Cyanobacteria bacterium Yellowstone A-Prime).